The chain runs to 130 residues: Small ribosomal subunit protein uS8 (130 aa).

The protein belongs to the universal ribosomal protein uS8 family. As to quaternary structure, part of the 30S ribosomal subunit. Contacts proteins S5 and S12.

One of the primary rRNA binding proteins, it binds directly to 16S rRNA central domain where it helps coordinate assembly of the platform of the 30S subunit. This chain is Small ribosomal subunit protein uS8, found in Stutzerimonas stutzeri (strain A1501) (Pseudomonas stutzeri).